Here is a 485-residue protein sequence, read N- to C-terminus: NADH-quinone oxidoreductase subunit N (485 aa).

The next 14 helical transmembrane spans lie at Leu-8–Ile-28, Phe-35–Val-55, Gly-71–Ala-91, Phe-105–Leu-125, Ser-127–Phe-147, Tyr-159–Ala-179, Leu-203–Phe-223, Pro-235–Met-255, Val-271–Gln-291, Leu-297–Gln-317, Val-326–Leu-346, Ala-373–Ile-393, Trp-408–Val-430, and Ile-455–Ile-475.

Belongs to the complex I subunit 2 family. NDH-1 is composed of 13 different subunits. Subunits NuoA, H, J, K, L, M, N constitute the membrane sector of the complex.

Its subcellular location is the cell inner membrane. The enzyme catalyses a quinone + NADH + 5 H(+)(in) = a quinol + NAD(+) + 4 H(+)(out). NDH-1 shuttles electrons from NADH, via FMN and iron-sulfur (Fe-S) centers, to quinones in the respiratory chain. The immediate electron acceptor for the enzyme in this species is believed to be ubiquinone. Couples the redox reaction to proton translocation (for every two electrons transferred, four hydrogen ions are translocated across the cytoplasmic membrane), and thus conserves the redox energy in a proton gradient. This chain is NADH-quinone oxidoreductase subunit N, found in Shigella flexneri.